The primary structure comprises 172 residues: Crossover junction endodeoxyribonuclease RuvC (172 aa).

Active-site residues include Asp-12, Glu-71, and Asp-143. Mg(2+)-binding residues include Asp-12, Glu-71, and Asp-143.

Belongs to the RuvC family. Homodimer which binds Holliday junction (HJ) DNA. The HJ becomes 2-fold symmetrical on binding to RuvC with unstacked arms; it has a different conformation from HJ DNA in complex with RuvA. In the full resolvosome a probable DNA-RuvA(4)-RuvB(12)-RuvC(2) complex forms which resolves the HJ. Requires Mg(2+) as cofactor.

It localises to the cytoplasm. The catalysed reaction is Endonucleolytic cleavage at a junction such as a reciprocal single-stranded crossover between two homologous DNA duplexes (Holliday junction).. Its function is as follows. The RuvA-RuvB-RuvC complex processes Holliday junction (HJ) DNA during genetic recombination and DNA repair. Endonuclease that resolves HJ intermediates. Cleaves cruciform DNA by making single-stranded nicks across the HJ at symmetrical positions within the homologous arms, yielding a 5'-phosphate and a 3'-hydroxyl group; requires a central core of homology in the junction. The consensus cleavage sequence is 5'-(A/T)TT(C/G)-3'. Cleavage occurs on the 3'-side of the TT dinucleotide at the point of strand exchange. HJ branch migration catalyzed by RuvA-RuvB allows RuvC to scan DNA until it finds its consensus sequence, where it cleaves and resolves the cruciform DNA. This chain is Crossover junction endodeoxyribonuclease RuvC, found in Coxiella burnetii (strain CbuG_Q212) (Coxiella burnetii (strain Q212)).